The chain runs to 395 residues: MSKRDFYEVLGVDKTADEKTLKSAYRKQAMKYHPDRNPGDAEAEAQFKVVGEAYSVLSDPNKRAAYDRMGHAAFEQGGGMGGGQGPFGGGGGAADFADIFEQVFGEAFNMGGGGGRRGGRGQAGPARGSDLRFDMEISLEDAFNGKDETIKVPTAMNCERCDGQGNEPGTELETCGTCQGAGRIRRSQGFFTMEQTCPQCGGRGQYVKTPCNDCDGVGRVRKTRTLNVTVPAGVEDGTRIRLAGEGEAGARGGPRGDLYIFISVREHEIFERDGPNLYCRTPASMVQAALGCTIQVPTIEGGKAEMKIAEGAQTGKRMRMRGKGMPRLRGGPRGDMIVELFVETPRNLCDRQKELLKEFCDLSGEGCNPDSAGFFNKVKQFWDEVTTDDGRPNAG.

The 66-residue stretch at 5 to 70 folds into the J domain; sequence DFYEVLGVDK…NKRAAYDRMG (66 aa). A CR-type zinc finger spans residues 145 to 223; that stretch reads GKDETIKVPT…CDGVGRVRKT (79 aa). Zn(2+) contacts are provided by Cys158, Cys161, Cys175, Cys178, Cys197, Cys200, Cys211, and Cys214. CXXCXGXG motif repeat units follow at residues 158–165, 175–182, 197–204, and 211–218; these read CERCDGQG, CGTCQGAG, CPQCGGRG, and CNDCDGVG.

This sequence belongs to the DnaJ family. In terms of assembly, homodimer. The cofactor is Zn(2+).

The protein localises to the cytoplasm. Participates actively in the response to hyperosmotic and heat shock by preventing the aggregation of stress-denatured proteins and by disaggregating proteins, also in an autonomous, DnaK-independent fashion. Unfolded proteins bind initially to DnaJ; upon interaction with the DnaJ-bound protein, DnaK hydrolyzes its bound ATP, resulting in the formation of a stable complex. GrpE releases ADP from DnaK; ATP binding to DnaK triggers the release of the substrate protein, thus completing the reaction cycle. Several rounds of ATP-dependent interactions between DnaJ, DnaK and GrpE are required for fully efficient folding. Also involved, together with DnaK and GrpE, in the DNA replication of plasmids through activation of initiation proteins. The polypeptide is Chaperone protein DnaJ (Maricaulis maris (strain MCS10) (Caulobacter maris)).